We begin with the raw amino-acid sequence, 291 residues long: 33 kDa chaperonin (291 aa).

2 cysteine pairs are disulfide-bonded: C229/C231 and C262/C265.

Belongs to the HSP33 family. Post-translationally, under oxidizing conditions two disulfide bonds are formed involving the reactive cysteines. Under reducing conditions zinc is bound to the reactive cysteines and the protein is inactive.

It localises to the cytoplasm. Its function is as follows. Redox regulated molecular chaperone. Protects both thermally unfolding and oxidatively damaged proteins from irreversible aggregation. Plays an important role in the bacterial defense system toward oxidative stress. This Aliivibrio fischeri (strain ATCC 700601 / ES114) (Vibrio fischeri) protein is 33 kDa chaperonin.